Reading from the N-terminus, the 136-residue chain is Acyl-CoA thioesterase YbgC (136 aa).

Residue D18 is part of the active site.

The protein belongs to the 4-hydroxybenzoyl-CoA thioesterase family.

Functionally, displays acyl-CoA thioesterase activity with short chain aliphatic acyl-CoA thioesters, such as propionyl-CoA and butyryl-CoA. Enzyme activity is relatively low, suggesting that the acyl-CoA thioesters used in the assays are not the physiological substrates. Has no detectable activity with 4-hydroxybenzoyl-CoA, lauroyl-CoA (C12:0), arachidoyl-CoA (C20:0) and arachidonoyl-CoA (C20:4). The sequence is that of Acyl-CoA thioesterase YbgC (ybgC) from Haemophilus influenzae (strain ATCC 51907 / DSM 11121 / KW20 / Rd).